Consider the following 402-residue polypeptide: Type II NADH:quinone oxidoreductase (402 aa).

FAD-binding positions include G12–A16, N39–K40, and V83. E172 is an active-site residue. FAD is bound by residues D302, A319–Q320, and K379.

This sequence belongs to the NADH dehydrogenase family. FAD serves as cofactor.

It is found in the cell membrane. The enzyme catalyses a quinone + NADH + H(+) = a quinol + NAD(+). In terms of biological role, alternative, nonproton pumping NADH:quinone oxidoreductase that delivers electrons to the respiratory chain by oxidation of NADH and reduction of quinones, and contributes to the regeneration of NAD(+). This is Type II NADH:quinone oxidoreductase from Staphylococcus epidermidis (strain ATCC 12228 / FDA PCI 1200).